Consider the following 741-residue polypeptide: Phage T7 exclusion protein (741 aa).

A KAP NTPase domain is found at 27–334 (FGNIAENISR…NSLIFLYPGM (308 aa)).

Responsible for the exclusion of phage T7 by plasmid F. Growth of bacteriophage T7 is inhibited in cells of E.coli that carries the plasmid F. This is Phage T7 exclusion protein (pifA) from Escherichia coli (strain K12).